The following is a 682-amino-acid chain: Potassium-transporting ATPase ATP-binding subunit (682 aa).

The next 4 helical transmembrane spans lie at Pro34–Val54, Ala62–Ala82, Ile219–Leu239, and Val254–Ile274. Asp307 (4-aspartylphosphate intermediate) is an active-site residue. ATP is bound by residues Asp344, Glu348, Phe377–Ser384, and Lys395. Positions 518 and 522 each coordinate Mg(2+). 3 helical membrane passes run Phe588–Met608, Ala616–Leu636, and Leu662–Ala682.

The protein belongs to the cation transport ATPase (P-type) (TC 3.A.3) family. Type IA subfamily. In terms of assembly, the system is composed of three essential subunits: KdpA, KdpB and KdpC.

It is found in the cell inner membrane. It carries out the reaction K(+)(out) + ATP + H2O = K(+)(in) + ADP + phosphate + H(+). Part of the high-affinity ATP-driven potassium transport (or Kdp) system, which catalyzes the hydrolysis of ATP coupled with the electrogenic transport of potassium into the cytoplasm. This subunit is responsible for energy coupling to the transport system and for the release of the potassium ions to the cytoplasm. The sequence is that of Potassium-transporting ATPase ATP-binding subunit from Salmonella schwarzengrund (strain CVM19633).